A 353-amino-acid chain; its full sequence is Photosystem II protein D1 (353 aa).

At Thr-2 the chain carries N-acetylthreonine. Residue Thr-2 is modified to Phosphothreonine. Helical transmembrane passes span 29-46 (YIGW…TATS), 118-133 (HFFL…EWEL), and 142-156 (WIAV…AATA). Chlorophyll a is bound at residue His-118. Tyr-126 is a binding site for pheophytin a. [CaMn4O5] cluster-binding residues include Asp-170 and Glu-189. A helical transmembrane segment spans residues 197-218 (FHMLGVAGVFGGSLFSAMHGSL). His-198 contacts chlorophyll a. A quinone is bound by residues His-215 and 264 to 265 (SF). His-215 contributes to the Fe cation binding site. His-272 lines the Fe cation pocket. The chain crosses the membrane as a helical span at residues 274–288 (FLAAWPVVGIWFTAL). [CaMn4O5] cluster contacts are provided by His-332, Glu-333, Asp-342, and Ala-344. Residues 345–353 (SVEAPSVNA) constitute a propeptide that is removed on maturation.

It belongs to the reaction center PufL/M/PsbA/D family. As to quaternary structure, PSII is composed of 1 copy each of membrane proteins PsbA, PsbB, PsbC, PsbD, PsbE, PsbF, PsbH, PsbI, PsbJ, PsbK, PsbL, PsbM, PsbT, PsbX, PsbY, PsbZ, Psb30/Ycf12, at least 3 peripheral proteins of the oxygen-evolving complex and a large number of cofactors. It forms dimeric complexes. The cofactor is The D1/D2 heterodimer binds P680, chlorophylls that are the primary electron donor of PSII, and subsequent electron acceptors. It shares a non-heme iron and each subunit binds pheophytin, quinone, additional chlorophylls, carotenoids and lipids. D1 provides most of the ligands for the Mn4-Ca-O5 cluster of the oxygen-evolving complex (OEC). There is also a Cl(-1) ion associated with D1 and D2, which is required for oxygen evolution. The PSII complex binds additional chlorophylls, carotenoids and specific lipids.. The 9 C-terminal residues are removed, probably by CTPA (AC O04073); processing is essential to allow assembly of the oxygen-evolving complex and thus photosynthetic growth. Post-translationally, tyr-161 forms a radical intermediate that is referred to as redox-active TyrZ, YZ or Y-Z.

The protein resides in the plastid. Its subcellular location is the chloroplast thylakoid membrane. The catalysed reaction is 2 a plastoquinone + 4 hnu + 2 H2O = 2 a plastoquinol + O2. Photosystem II (PSII) is a light-driven water:plastoquinone oxidoreductase that uses light energy to abstract electrons from H(2)O, generating O(2) and a proton gradient subsequently used for ATP formation. It consists of a core antenna complex that captures photons, and an electron transfer chain that converts photonic excitation into a charge separation. The D1/D2 (PsbA/PsbD) reaction center heterodimer binds P680, the primary electron donor of PSII as well as several subsequent electron acceptors. This is Photosystem II protein D1 from Tetradesmus obliquus (Green alga).